A 79-amino-acid polypeptide reads, in one-letter code: D-alanyl carrier protein (79 aa).

Residues Met1 to Met77 enclose the Carrier domain. The residue at position 35 (Ser35) is an O-(pantetheine 4'-phosphoryl)serine.

The protein belongs to the DltC family. Post-translationally, 4'-phosphopantetheine is transferred from CoA to a specific serine of apo-DCP.

It localises to the cytoplasm. It functions in the pathway cell wall biogenesis; lipoteichoic acid biosynthesis. In terms of biological role, carrier protein involved in the D-alanylation of lipoteichoic acid (LTA). The loading of thioester-linked D-alanine onto DltC is catalyzed by D-alanine--D-alanyl carrier protein ligase DltA. The DltC-carried D-alanyl group is further transferred to cell membrane phosphatidylglycerol (PG) by forming an ester bond, probably catalyzed by DltD. D-alanylation of LTA plays an important role in modulating the properties of the cell wall in Gram-positive bacteria, influencing the net charge of the cell wall. The chain is D-alanyl carrier protein from Streptococcus suis (strain 98HAH33).